Here is a 775-residue protein sequence, read N- to C-terminus: Ankyrin repeat and EF-hand domain-containing protein 1 (775 aa).

ANK repeat units follow at residues aspartate 47–valine 76, threonine 184–alanine 213, aspartate 217–leucine 246, aspartate 250–tryptophan 279, threonine 524–alanine 553, phenylalanine 557–alanine 586, asparagine 590–isoleucine 619, and lysine 623–lysine 652.

This is Ankyrin repeat and EF-hand domain-containing protein 1 (Ankef1) from Mus musculus (Mouse).